The sequence spans 1518 residues: Hormone receptor 4 (1518 aa).

Disordered stretches follow at residues 30 to 50 (RCSSDGESIADTSTSSPDLLA), 145 to 327 (TSST…KLSE), 380 to 587 (PSRI…QPQA), 672 to 820 (VGVG…SSVA), and 887 to 913 (SSNSTGLGGVGGGMGGRNLEAPHEPTD). Residues 34-46 (DGESIADTSTSSP) show a composition bias toward polar residues. Composition is skewed to low complexity over residues 145–189 (TSST…SSSG) and 208–219 (SSSSAISAAAAS). The span at 238 to 260 (EGGGPAGDGSGATGGGNTSGGST) shows a compositional bias: gly residues. Positions 291–323 (STTTTTGRPTLTPTNGVLSSASAGTGISTGSSA) are enriched in low complexity. The span at 400 to 429 (QRERERERDRERDRERERERDRDREREREQ) shows a compositional bias: basic and acidic residues. 2 stretches are compositionally biased toward polar residues: residues 430-451 (SISSSQQHLSRVSASPPTQLSH) and 475-489 (RKSSPPTEHLLSQSM). Low complexity-rich tracts occupy residues 490–529 (QHLTQQQAIHLHHLLGQQQQQQQASHPQQQQQQQHSPHSL), 546–586 (HHQQ…QQPQ), 681–705 (GSVQCPSPHPSSSSSSSQLSPQTPS), and 738–799 (GQSH…PSSS). 2 stretches are compositionally biased toward gly residues: residues 800–812 (SGGGSVSGGGVGG) and 892–902 (GLGGVGGGMGG). Positions 918–993 (PLVCMICEDK…QGMVLQAVRE (76 aa)) form a DNA-binding region, nuclear receptor. 2 consecutive NR C4-type zinc fingers follow at residues 921–941 (CMICEDKATGLHYGIITCEGC) and 957–976 (CVADGTCEITKAQRNRCQYC). 3 disordered regions span residues 1015-1101 (KHKK…AAVA), 1142-1210 (LLQA…LPPH), and 1341-1371 (KRRGEGGGSRHGSPASTPLSTPTGTPLSTPI). Low complexity predominate over residues 1021–1060 (QKQQQQAAQQQQQQAAAQQQHQQQQQHQQHQQHQQQQLHS). Basic residues predominate over residues 1061-1077 (PLHHHHHQGHQSHHAQQ). Low complexity-rich tracts occupy residues 1078–1101 (QHHPQLSPHHLLSPQQQQLAAAVA) and 1144–1193 (QAPP…HHQQ). A compositionally biased stretch (gly residues) spans 1194 to 1205 (QGGGGGGAGGGA). Residues 1250-1518 (HALGMIQTLI…PFVLNSASIR (269 aa)) form the NR LBD domain. The span at 1351–1368 (HGSPASTPLSTPTGTPLS) shows a compositional bias: low complexity.

The protein belongs to the nuclear hormone receptor family. NR1 subfamily. During L2 and L3 stages, strong constitutive expression is seen in the ring gland. Lower expression is detected in specific neurons of the central nervous system (CNS) (at protein level).

It localises to the nucleus. Coordinates growth and maturation by mediating endocrine responses to the attainment of critical weight during larval development. Plays a central role in the genetic cascades triggered by the steroid hormone ecdysone at the onset of metamorphosis, acting as both a repressor of the early ecdysone-induced regulatory genes and an inducer of the ftz-f1 midprepupal competence factor. The protein is Hormone receptor 4 (Hr4) of Drosophila melanogaster (Fruit fly).